Reading from the N-terminus, the 680-residue chain is Conserved oligomeric Golgi complex subunit 6 (680 aa).

The segment at 479 to 517 (HKSKKSGQLPRRSRTSSDSSQLTSVDALLSSSPSPPQNN) is disordered.

This sequence belongs to the COG6 family. Component of the conserved oligomeric Golgi complex which is composed of eight different subunits and is required for normal Golgi morphology and localization. Interacts with COG5, COG7 and COG8.

It is found in the golgi apparatus membrane. In terms of biological role, required for normal Golgi function. The sequence is that of Conserved oligomeric Golgi complex subunit 6 from Arabidopsis thaliana (Mouse-ear cress).